The sequence spans 851 residues: Beta-galactosidase BoGH2A (851 aa).

An N-terminal signal peptide occupies residues 1-19 (MMIGKLKYLMLGGCLILGS). Cysteine 20 carries N-palmitoyl cysteine lipidation. Cysteine 20 carries S-diacylglycerol cysteine lipidation. The Proton donor role is filled by glutamate 437. Glutamate 544 functions as the Nucleophile in the catalytic mechanism.

The protein belongs to the glycosyl hydrolase 2 family.

The protein resides in the cell inner membrane. The enzyme catalyses Hydrolysis of terminal non-reducing beta-D-galactose residues in beta-D-galactosides.. It participates in glucan metabolism; xyloglucan degradation. Catalyzes the hydrolysis of terminal non-reducing beta-D-galactose residues in beta-D-galactosides in xyloglucan degradation, converting 'L' units to 'X' units. The chain is Beta-galactosidase BoGH2A from Bacteroides ovatus (strain ATCC 8483 / DSM 1896 / JCM 5824 / BCRC 10623 / CCUG 4943 / NCTC 11153).